Here is a 130-residue protein sequence, read N- to C-terminus: Small ribosomal subunit protein uS9 (130 aa).

The interval 109–130 (RVKERKKYGQKGARAKFQFSKR) is disordered.

This sequence belongs to the universal ribosomal protein uS9 family.

This chain is Small ribosomal subunit protein uS9, found in Desulfotalea psychrophila (strain LSv54 / DSM 12343).